The primary structure comprises 219 residues: 2-hydroxy-3-keto-5-methylthiopentenyl-1-phosphate phosphatase (219 aa).

Belongs to the HAD-like hydrolase superfamily. MtnX family.

The enzyme catalyses 2-hydroxy-5-methylsulfanyl-3-oxopent-1-enyl phosphate + H2O = 1,2-dihydroxy-5-(methylsulfanyl)pent-1-en-3-one + phosphate. It participates in amino-acid biosynthesis; L-methionine biosynthesis via salvage pathway; L-methionine from S-methyl-5-thio-alpha-D-ribose 1-phosphate: step 4/6. Dephosphorylates 2-hydroxy-3-keto-5-methylthiopentenyl-1-phosphate (HK-MTPenyl-1-P) yielding 1,2-dihydroxy-3-keto-5-methylthiopentene (DHK-MTPene). This Bacillus thuringiensis subsp. konkukian (strain 97-27) protein is 2-hydroxy-3-keto-5-methylthiopentenyl-1-phosphate phosphatase.